The following is a 399-amino-acid chain: Tryptophan synthase beta chain (399 aa).

Lysine 90 is modified (N6-(pyridoxal phosphate)lysine).

The protein belongs to the TrpB family. As to quaternary structure, tetramer of two alpha and two beta chains. Pyridoxal 5'-phosphate serves as cofactor.

The enzyme catalyses (1S,2R)-1-C-(indol-3-yl)glycerol 3-phosphate + L-serine = D-glyceraldehyde 3-phosphate + L-tryptophan + H2O. The protein operates within amino-acid biosynthesis; L-tryptophan biosynthesis; L-tryptophan from chorismate: step 5/5. Functionally, the beta subunit is responsible for the synthesis of L-tryptophan from indole and L-serine. The protein is Tryptophan synthase beta chain of Phocaeicola vulgatus (strain ATCC 8482 / DSM 1447 / JCM 5826 / CCUG 4940 / NBRC 14291 / NCTC 11154) (Bacteroides vulgatus).